The following is a 272-amino-acid chain: Shikimate dehydrogenase (NADP(+)) (272 aa).

Residues 14–16 (SKS) and Thr-61 contribute to the shikimate site. The active-site Proton acceptor is Lys-65. Glu-77 provides a ligand contact to NADP(+). 2 residues coordinate shikimate: Asn-86 and Asp-102. NADP(+) is bound by residues 126–130 (GAGGA), 149–154 (NRTVSR), and Met-213. A shikimate-binding site is contributed by Tyr-215. Position 237 (Gly-237) interacts with NADP(+).

This sequence belongs to the shikimate dehydrogenase family. As to quaternary structure, homodimer.

The enzyme catalyses shikimate + NADP(+) = 3-dehydroshikimate + NADPH + H(+). It functions in the pathway metabolic intermediate biosynthesis; chorismate biosynthesis; chorismate from D-erythrose 4-phosphate and phosphoenolpyruvate: step 4/7. In terms of biological role, involved in the biosynthesis of the chorismate, which leads to the biosynthesis of aromatic amino acids. Catalyzes the reversible NADPH linked reduction of 3-dehydroshikimate (DHSA) to yield shikimate (SA). The sequence is that of Shikimate dehydrogenase (NADP(+)) from Escherichia coli O6:K15:H31 (strain 536 / UPEC).